Here is a 110-residue protein sequence, read N- to C-terminus: Glycine cleavage system H-like protein (110 aa).

The region spanning 10–97 (VEKVGDLYVF…PEENWLFKLD (88 aa)) is the Lipoyl-binding domain. Asp27 is subject to ADP-ribosyl aspartic acid. An N6-lipoyllysine modification is found at Lys56.

Lipoylated GcvH-L directly interacts with SAV0325, which reverses the SirTM-mediated mono-ADP-ribosylation of GcvH-L, and with the oxidoreductase SAV0322. In terms of processing, is lipoylated on K-56 by LplA2 (SAV0327) and then mono-ADP-ribosylated, probably on D-27, by SirTM (SAV0326). The mono-ADP-ribosylation state of GcvH-L might regulate the availability of the lipoyl moiety for redox reactions; ADP-ribosylation would inhibit the interaction of the oxidoreductase with GcvH-L when it is not required, thus ADP-ribosylation of GcvH-L might be acting to keep the response 'off' under non-stress conditions.

May act as a carrier protein for the ROS scavenging lipoyl moiety and/or as a substrate for oxidoreductases such as SAV0322 and SAV0323. The sequence is that of Glycine cleavage system H-like protein from Staphylococcus aureus (strain Mu50 / ATCC 700699).